We begin with the raw amino-acid sequence, 145 residues long: Peroxide operon regulator (145 aa).

The DNA-binding stretch occupies residues 1 to 78 (MAAHELKEAL…SGLVKELTYG (78 aa)). The Zn(2+) site is built by cysteine 96, cysteine 99, cysteine 136, and cysteine 139.

This sequence belongs to the Fur family. As to quaternary structure, homodimer. Mn(2+) serves as cofactor. It depends on Fe(2+) as a cofactor. The cofactor is Zn(2+). Post-translationally, possibly oxidized on a cysteine residue; the Cys-SOH formed in response to oxidative signaling may rapidly react with a Cys-SH to form a disulfide bond, leading to the loss of metal ion and inactivation of repressor function. Oxidized PerR can be further reduced by thiol reductants and repressor activity restored.

It is found in the cytoplasm. Functionally, hydrogen and organic peroxide sensor. Represses the expression of a regulon of peroxide-inducible genes such as katA, ahpC, ahpF, the heme biosynthesis operon (hemAXCDBL), fur, perR, zosA and mrgA. This chain is Peroxide operon regulator (perR), found in Bacillus subtilis (strain 168).